An 830-amino-acid polypeptide reads, in one-letter code: Probable glucan 1,3-beta-glucosidase D (830 aa).

Residues 1–34 show a composition bias toward basic and acidic residues; that stretch reads MPSQSRSRDRYRGRDTEYTRRRYPDEHDYSHDDH. A disordered region spans residues 1-279; it reads MPSQSRSRDR…PPMDARWPKG (279 aa). Residues 1–301 are Cytoplasmic-facing; sequence MPSQSRSRDR…GRPFWKQKKW (301 aa). Residues 35–51 are compositionally biased toward acidic residues; that stretch reads DYDYDDDDDDNDDLEQD. Composition is skewed to basic and acidic residues over residues 52–98 and 110–175; these read VTER…ERRR and QHRE…KHQS. A compositionally biased stretch (low complexity) spans 181–194; sequence SASHLLSADALARL. 3 stretches are compositionally biased toward basic and acidic residues: residues 198–215, 228–243, and 253–264; these read YEKE…AAKA, EQER…DRSR, and EEGRGPEMEFRR. A helical; Signal-anchor for type II membrane protein membrane pass occupies residues 302 to 322; sequence LIGIGVVILILVIVIPVAVVV. The Extracellular segment spans residues 323–830; it reads SKKHNDKPNA…PDFGSLPEYY (508 aa). Residues 327-351 form a disordered region; the sequence is NDKPNATTTQPDGTTPSNSNLDGLS. Positions 330–348 are enriched in polar residues; it reads PNATTTQPDGTTPSNSNLD. N-linked (GlcNAc...) asparagine glycans are attached at residues N331, N376, N381, N393, N546, and N558. E597 (proton donor) is an active-site residue. N610, N636, N669, and N689 each carry an N-linked (GlcNAc...) asparagine glycan. E701 (nucleophile) is an active-site residue.

The protein belongs to the glycosyl hydrolase 5 (cellulase A) family.

The protein localises to the cell membrane. It carries out the reaction Successive hydrolysis of beta-D-glucose units from the non-reducing ends of (1-&gt;3)-beta-D-glucans, releasing alpha-glucose.. Its function is as follows. Glucosidase involved in the degradation of cellulosic biomass. Active on lichenan. In Aspergillus clavatus (strain ATCC 1007 / CBS 513.65 / DSM 816 / NCTC 3887 / NRRL 1 / QM 1276 / 107), this protein is Probable glucan 1,3-beta-glucosidase D (exgD).